The following is a 147-amino-acid chain: Small ribosomal subunit protein eS10B (147 aa).

The interval 90–147 is disordered; sequence THKRQVRPAAPRAGRPEPRERSSAADAGYRRAEKKDDGAAPGGFAPSFRGGFGRPVAA. Over residues 103-127 the composition is skewed to basic and acidic residues; that stretch reads GRPEPRERSSAADAGYRRAEKKDDG.

It belongs to the eukaryotic ribosomal protein eS10 family. In terms of assembly, component of the small ribosomal subunit (SSU). Mature yeast ribosomes consist of a small (40S) and a large (60S) subunit. The 40S small subunit contains 1 molecule of ribosomal RNA (18S rRNA) and at least 33 different proteins. The large 60S subunit contains 3 rRNA molecules (25S, 5.8S and 5S rRNA) and at least 46 different proteins. eS10 interacts with GCN1 (via middle region); this interaction is direct and promotes GCN2 kinase activity.

It is found in the cytoplasm. Its function is as follows. Component of the ribosome, a large ribonucleoprotein complex responsible for the synthesis of proteins in the cell. The small ribosomal subunit (SSU) binds messenger RNAs (mRNAs) and translates the encoded message by selecting cognate aminoacyl-transfer RNA (tRNA) molecules. The large subunit (LSU) contains the ribosomal catalytic site termed the peptidyl transferase center (PTC), which catalyzes the formation of peptide bonds, thereby polymerizing the amino acids delivered by tRNAs into a polypeptide chain. The nascent polypeptides leave the ribosome through a tunnel in the LSU and interact with protein factors that function in enzymatic processing, targeting, and the membrane insertion of nascent chains at the exit of the ribosomal tunnel. eS10 plays a role as a positive regulator of the GCN2 kinase activity by stimulating GCN1-mediated GCN2 activation. The protein is Small ribosomal subunit protein eS10B (rps1002) of Schizosaccharomyces pombe (strain 972 / ATCC 24843) (Fission yeast).